A 291-amino-acid polypeptide reads, in one-letter code: tRNA U34 carboxymethyltransferase (291 aa).

Residues Lys61, Trp75, Lys80, Gly100, 122 to 124 (DPS), 149 to 150 (VE), Tyr169, and Arg284 each bind carboxy-S-adenosyl-L-methionine.

The protein belongs to the class I-like SAM-binding methyltransferase superfamily. CmoB family. Homotetramer.

The catalysed reaction is carboxy-S-adenosyl-L-methionine + 5-hydroxyuridine(34) in tRNA = 5-carboxymethoxyuridine(34) in tRNA + S-adenosyl-L-homocysteine + H(+). Its function is as follows. Catalyzes carboxymethyl transfer from carboxy-S-adenosyl-L-methionine (Cx-SAM) to 5-hydroxyuridine (ho5U) to form 5-carboxymethoxyuridine (cmo5U) at position 34 in tRNAs. The protein is tRNA U34 carboxymethyltransferase of Campylobacter jejuni (strain RM1221).